Consider the following 294-residue polypeptide: NADH-cytochrome b5 reductase 1 (294 aa).

Residues 18-38 (PFIVFATVATIISAFIGYYFL) traverse the membrane as a helical segment. The 104-residue stretch at 51-154 (DEFQKFPLIE…RGPKGFFTYT (104 aa)) folds into the FAD-binding FR-type domain. Residues 134–149 (AGKN…GPKG) and 160–192 (SFGM…KIHL) each bind FAD.

The protein belongs to the flavoprotein pyridine nucleotide cytochrome reductase family. Monomer. Component of the 2-(3-amino-3-carboxypropyl)histidine synthase complex composed of DPH1, DPH2, DPH3 and a NADH-dependent reductase, predominantly CBR1. FAD serves as cofactor.

The protein resides in the mitochondrion outer membrane. It carries out the reaction 2 Fe(III)-[cytochrome b5] + NADH = 2 Fe(II)-[cytochrome b5] + NAD(+) + H(+). It catalyses the reaction 2 Fe(3+)-[Dph3] + NADH = 2 Fe(2+)-[Dph3] + NAD(+) + H(+). The protein operates within protein modification; peptidyl-diphthamide biosynthesis. Functionally, NADH-dependent reductase for DPH3 and cytochrome b5. Required for the first step of diphthamide biosynthesis, a post-translational modification of histidine which occurs in elongation factor 2. DPH1 and DPH2 transfer a 3-amino-3-carboxypropyl (ACP) group from S-adenosyl-L-methionine (SAM) to a histidine residue, the reaction is assisted by a reduction system comprising DPH3 and a NADH-dependent reductase, predominantly CBR1. By reducing DPH3, also involved in the formation of the tRNA wobble base modification mcm5s 2U (5-methoxycarbonylmethyl-2-thiouridine), mediated by the elongator complex. The cytochrome b5/NADH cytochrome b5 reductase electron transfer system supports the catalytic activity of several sterol biosynthetic enzymes. In Candida albicans (strain SC5314 / ATCC MYA-2876) (Yeast), this protein is NADH-cytochrome b5 reductase 1 (CBR1).